The chain runs to 460 residues: Bifunctional protein GlmU (460 aa).

The pyrophosphorylase stretch occupies residues 1 to 229; the sequence is MTNYAIILAA…FNESLGVNDR (229 aa). UDP-N-acetyl-alpha-D-glucosamine contacts are provided by residues 8–11, lysine 22, glutamine 72, and 77–78; these read LAAG and GT. Aspartate 102 is a binding site for Mg(2+). 4 residues coordinate UDP-N-acetyl-alpha-D-glucosamine: glycine 139, glutamate 154, asparagine 169, and asparagine 227. Asparagine 227 is a Mg(2+) binding site. The linker stretch occupies residues 230-250; sequence VALATAETVMRQRITQKHMVN. The tract at residues 251–460 is N-acetyltransferase; that stretch reads GVTFHNPETV…RLAHHPSRSK (210 aa). Residues arginine 332 and lysine 350 each coordinate UDP-N-acetyl-alpha-D-glucosamine. Histidine 362 acts as the Proton acceptor in catalysis. Positions 365 and 376 each coordinate UDP-N-acetyl-alpha-D-glucosamine. Acetyl-CoA contacts are provided by residues alanine 379, 385 to 386, serine 404, alanine 422, and arginine 439; that span reads NY.

The protein in the N-terminal section; belongs to the N-acetylglucosamine-1-phosphate uridyltransferase family. This sequence in the C-terminal section; belongs to the transferase hexapeptide repeat family. As to quaternary structure, homotrimer. Requires Mg(2+) as cofactor.

The protein resides in the cytoplasm. The enzyme catalyses alpha-D-glucosamine 1-phosphate + acetyl-CoA = N-acetyl-alpha-D-glucosamine 1-phosphate + CoA + H(+). It catalyses the reaction N-acetyl-alpha-D-glucosamine 1-phosphate + UTP + H(+) = UDP-N-acetyl-alpha-D-glucosamine + diphosphate. It functions in the pathway nucleotide-sugar biosynthesis; UDP-N-acetyl-alpha-D-glucosamine biosynthesis; N-acetyl-alpha-D-glucosamine 1-phosphate from alpha-D-glucosamine 6-phosphate (route II): step 2/2. Its pathway is nucleotide-sugar biosynthesis; UDP-N-acetyl-alpha-D-glucosamine biosynthesis; UDP-N-acetyl-alpha-D-glucosamine from N-acetyl-alpha-D-glucosamine 1-phosphate: step 1/1. It participates in bacterial outer membrane biogenesis; LPS lipid A biosynthesis. Its function is as follows. Catalyzes the last two sequential reactions in the de novo biosynthetic pathway for UDP-N-acetylglucosamine (UDP-GlcNAc). The C-terminal domain catalyzes the transfer of acetyl group from acetyl coenzyme A to glucosamine-1-phosphate (GlcN-1-P) to produce N-acetylglucosamine-1-phosphate (GlcNAc-1-P), which is converted into UDP-GlcNAc by the transfer of uridine 5-monophosphate (from uridine 5-triphosphate), a reaction catalyzed by the N-terminal domain. The polypeptide is Bifunctional protein GlmU (Streptococcus pyogenes serotype M3 (strain ATCC BAA-595 / MGAS315)).